A 243-amino-acid polypeptide reads, in one-letter code: Type III pantothenate kinase (243 aa).

ATP is bound at residue 6 to 13 (DGGNTFIK). Substrate is bound by residues tyrosine 87 and 94–97 (GKDR). Catalysis depends on aspartate 96, which acts as the Proton acceptor. Aspartate 117 lines the K(+) pocket. Threonine 120 lines the ATP pocket. A substrate-binding site is contributed by threonine 172.

This sequence belongs to the type III pantothenate kinase family. Homodimer. The cofactor is NH4(+). It depends on K(+) as a cofactor.

The protein resides in the cytoplasm. The enzyme catalyses (R)-pantothenate + ATP = (R)-4'-phosphopantothenate + ADP + H(+). It participates in cofactor biosynthesis; coenzyme A biosynthesis; CoA from (R)-pantothenate: step 1/5. Its function is as follows. Catalyzes the phosphorylation of pantothenate (Pan), the first step in CoA biosynthesis. This Christiangramia forsetii (strain DSM 17595 / CGMCC 1.15422 / KT0803) (Gramella forsetii) protein is Type III pantothenate kinase.